Here is a 343-residue protein sequence, read N- to C-terminus: L-threonine 3-dehydrogenase (343 aa).

Cysteine 40 is a Zn(2+) binding site. Catalysis depends on charge relay system residues threonine 42 and histidine 45. 6 residues coordinate Zn(2+): histidine 65, glutamate 66, cysteine 95, cysteine 98, cysteine 101, and cysteine 109. Residues isoleucine 177, aspartate 197, arginine 202, 264-266, and 288-289 each bind NAD(+); these read LGI and IY.

The protein belongs to the zinc-containing alcohol dehydrogenase family. Homotetramer. Zn(2+) is required as a cofactor.

It localises to the cytoplasm. The enzyme catalyses L-threonine + NAD(+) = (2S)-2-amino-3-oxobutanoate + NADH + H(+). Its pathway is amino-acid degradation; L-threonine degradation via oxydo-reductase pathway; glycine from L-threonine: step 1/2. In terms of biological role, catalyzes the NAD(+)-dependent oxidation of L-threonine to 2-amino-3-ketobutyrate. In Vibrio vulnificus (strain CMCP6), this protein is L-threonine 3-dehydrogenase.